A 702-amino-acid polypeptide reads, in one-letter code: Zinc finger CCCH domain-containing protein 62 (702 aa).

The interval 1-77 is disordered; the sequence is MAAPAADDDD…SYDDPTFDPA (77 aa). Acidic residues predominate over residues 18-54; it reads EEDDGEEEEGSEEEVESDDEEEEEGEGYDWSEEDDPE. Residues 132–166 enclose the SAP domain; sequence LEKLKVYECKAYLRMHKLRLSGNKEVLLTRIRGQI. Disordered stretches follow at residues 288–349, 405–532, 546–602, and 634–673; these read EKHA…NTVQ, SRTS…QQQP, GGTS…RETH, and QMSQDQYHHQQNHHQNYHGRQGMNGNQYHDRQNHNQNPQR. Basic and acidic residues predominate over residues 298-325; the sequence is KTREVRIKDKENERMRRLNRNKENKSKG. Polar residues-rich tracts occupy residues 326–349 and 405–419; these read QDNMNKKSSQAVFPQHTVTTNTVQ and SRTSTTQLINHQAPS. Residues 430–448 show a composition bias toward low complexity; that stretch reads QQQQQQQPPKSIKPAPIQQ. Polar residues-rich tracts occupy residues 472-502, 522-532, 546-565, and 575-591; these read SQEQRAAVSQTSAARQDFTNHQAPPSRQHGG, QQAVSYTQQQP, GGTSTSRTGFMDRQSNNWGS, and PFTQKAKTYQHGSNGSG. The C3H1-type zinc-finger motif lies at 674-702; it reads FRPWKPCFIYQQQGWCPYGENCKFMHDLR.

This chain is Zinc finger CCCH domain-containing protein 62, found in Oryza sativa subsp. japonica (Rice).